Here is a 475-residue protein sequence, read N- to C-terminus: Pup--protein ligase (475 aa).

Glu-19 lines the Mg(2+) pocket. Residue Arg-64 coordinates ATP. Tyr-66 contributes to the Mg(2+) binding site. Asp-68 functions as the Proton acceptor in the catalytic mechanism. Mg(2+) is bound at residue Glu-74. ATP-binding residues include Thr-77 and Trp-436.

Belongs to the Pup ligase/Pup deamidase family. Pup-conjugating enzyme subfamily.

The enzyme catalyses ATP + [prokaryotic ubiquitin-like protein]-L-glutamate + [protein]-L-lysine = ADP + phosphate + N(6)-([prokaryotic ubiquitin-like protein]-gamma-L-glutamyl)-[protein]-L-lysine.. It participates in protein degradation; proteasomal Pup-dependent pathway. It functions in the pathway protein modification; protein pupylation. Functionally, catalyzes the covalent attachment of the prokaryotic ubiquitin-like protein modifier Pup to the proteasomal substrate proteins, thereby targeting them for proteasomal degradation. This tagging system is termed pupylation. The ligation reaction involves the side-chain carboxylate of the C-terminal glutamate of Pup and the side-chain amino group of a substrate lysine. In Corynebacterium aurimucosum (strain ATCC 700975 / DSM 44827 / CIP 107346 / CN-1) (Corynebacterium nigricans), this protein is Pup--protein ligase.